The sequence spans 382 residues: Pyruvate dehydrogenase E1 component subunit beta, mitochondrial (382 aa).

The transit peptide at 1 to 46 (MSRFLRPAFRLATTATRASTIRPTPSSLITKAAAVPTTRLLQKRSY) directs the protein to the mitochondrion. Residue Glu-112 coordinates thiamine diphosphate. Residues Ile-165, Ala-213, Ile-214, Asp-216, and Asn-218 each coordinate K(+).

In terms of assembly, eukaryotic pyruvate dehydrogenase (PDH) complexes are organized as a core consisting of the oligomeric dihydrolipoamide acetyl-transferase (E2), around which are arranged multiple copies of pyruvate dehydrogenase (E1), dihydrolipoamide dehydrogenase (E3) and protein X (E3BP) bound by non-covalent bonds. The Chaetomium thermophilum PDH complex contains 60 E2 units, 12 E3BP units, about 20 E1 units, and 12 or more E3 units. The units are organized in 1 E2 60-mer, 4 E3BP trimers, about 20 E1 tetramers, and a maximum of 12 E3 dimers. Pyruvate dehydrogenase (E1) is active as a tetramer of 2 alpha and 2 beta subunits. The E3BP trimers are bound inside the icosahedral core with tetrahedral symmetry. It depends on thiamine diphosphate as a cofactor.

Its subcellular location is the mitochondrion. It catalyses the reaction N(6)-[(R)-lipoyl]-L-lysyl-[protein] + pyruvate + H(+) = N(6)-[(R)-S(8)-acetyldihydrolipoyl]-L-lysyl-[protein] + CO2. The 10-megadalton pyruvate dehydrogenase complex contains multiple copies of three enzymatic components: pyruvate dehydrogenase (E1), dihydrolipoamide acetyltransferase (E2) and lipoamide dehydrogenase (E3) and catalyzes the overall oxidative decarboxylation of pyruvate to form acetyl-CoA and CO(2). Within the complex, pyruvate and thiamine pyrophosphate (TPP or vitamin B1) are bound by pyruvate dehydrogenase E1 subunits alpha and beta and pyruvate is decarboxylated leading to the 2-carbon hydrohyethyl bound to TPP. The E2 component contains covalently-bound lipoyl cofactors and transfers the hydroxyethyl group from TPP to an oxidized form of covalently bound lipoamide, and the resulting acetyl group is then transferred to free coenzyme A to form acetyl-CoA and reduced dihydrolipoamide-E2. Finally, the flavoprotein dihydrolipoamide dehydrogenase (E3) re-oxidizes the lipoyl group of dihydrolipoamide-E2 to form lipoamide-E2 and NADH. A fourth subunit, E3BP, is responsible for tethering E3 in proximity to the core, forming the entire metabolon. The sequence is that of Pyruvate dehydrogenase E1 component subunit beta, mitochondrial from Chaetomium thermophilum (strain DSM 1495 / CBS 144.50 / IMI 039719) (Thermochaetoides thermophila).